We begin with the raw amino-acid sequence, 453 residues long: uncharacterized protein (453 aa).

The Cytoplasmic portion of the chain corresponds to 1-110 (MIQTQSTAIK…KAILRTFNHP (110 aa)). A helical transmembrane segment spans residues 111–131 (IALTELQFLVSAVLCVGFASI). Residues 132–172 (VNLFRLPRLKHTKFSKALNSFPDGILPEYLDGNFRSSILHK) lie on the Lumenal side of the membrane. A helical transmembrane segment spans residues 173–193 (FLVPSKLVLMTTFPMGIFQFI). Residues 194-201 (GHITSHKA) are Cytoplasmic-facing. Residues 202–222 (VSMIPVSLVHSVKALSPIITV) traverse the membrane as a helical segment. At 223–234 (GYYKFFEHRYYN) the chain is on the lumenal side. A helical membrane pass occupies residues 235-255 (SMTYYTLLLLIFGVMTTCWST). Over 256–269 (HGSKRASDNKSGSS) the chain is Cytoplasmic. A helical membrane pass occupies residues 270-290 (LIGLLFAFISMIIFVAQNIFA). Over 291–332 (KNILTIRRKVGILPSSSTDDVTSKEGQPSLDKTRFSPLQVDK) the chain is Lumenal. A helical membrane pass occupies residues 333 to 353 (ITILFYCSCIGFSLTLLPFLT). The Cytoplasmic segment spans residues 354 to 371 (GELMHGGSVINDLTLETV). Residues 372–392 (ALVAIHGIAHFFQAMLAFQLI) form a helical membrane-spanning segment. Residues 393-413 (GLLSSINYSVANIMKRIVVIS) lie on the Lumenal side of the membrane. Residues 414–434 (VALFWETKLNFFQVFGVILTI) traverse the membrane as a helical segment. Topologically, residues 435-453 (AGLYGYDKWGLSKKDGRQA) are cytoplasmic.

Belongs to the TPT transporter family.

Its subcellular location is the membrane. In terms of biological role, able to suppress the functional loss of YPT1. May form a channel. Protein SLY41 is not essential for cell viability. The SLY41 gene is a multicopy suppressor. This is an uncharacterized protein from Saccharomyces cerevisiae (strain ATCC 204508 / S288c) (Baker's yeast).